A 232-amino-acid polypeptide reads, in one-letter code: Beta-casein (232 aa).

The first 15 residues, 1 to 15 (MKVLILACRVALALA), serve as a signal peptide directing secretion. A phosphoserine mark is found at S30, S32, S33, and S34.

It belongs to the beta-casein family. As to expression, mammary gland specific. Secreted in milk.

The protein resides in the secreted. Its function is as follows. Important role in determination of the surface properties of the casein micelles. The polypeptide is Beta-casein (CSN2) (Camelus dromedarius (Dromedary)).